A 347-amino-acid chain; its full sequence is 3-isopropylmalate dehydrogenase (347 aa).

Arginine 95, arginine 105, arginine 129, and aspartate 220 together coordinate substrate. 3 residues coordinate Mg(2+): aspartate 220, aspartate 244, and aspartate 248. 280–292 (GSAPDIAGQGKAD) contributes to the NAD(+) binding site.

This sequence belongs to the isocitrate and isopropylmalate dehydrogenases family. LeuB type 2 subfamily. In terms of assembly, homodimer. Requires Mg(2+) as cofactor. The cofactor is Mn(2+).

The protein resides in the cytoplasm. The enzyme catalyses (2R,3S)-3-isopropylmalate + NAD(+) = 4-methyl-2-oxopentanoate + CO2 + NADH. It participates in amino-acid biosynthesis; L-leucine biosynthesis; L-leucine from 3-methyl-2-oxobutanoate: step 3/4. Functionally, catalyzes the oxidation of 3-carboxy-2-hydroxy-4-methylpentanoate (3-isopropylmalate) to 3-carboxy-4-methyl-2-oxopentanoate. The product decarboxylates to 4-methyl-2 oxopentanoate. In Beutenbergia cavernae (strain ATCC BAA-8 / DSM 12333 / CCUG 43141 / JCM 11478 / NBRC 16432 / NCIMB 13614 / HKI 0122), this protein is 3-isopropylmalate dehydrogenase.